Consider the following 327-residue polypeptide: Expansin-B7 (327 aa).

The N-terminal stretch at 1–30 is a signal peptide; that stretch reads MAGRSRRRSFWSVGVAAALLCLLAAHGCSA. The segment at 30 to 88 is disordered; it reads AKHHKPKPTPGGISGNASSSSSNSSTPSIPPPVAPTPTAPTPPIPSPGTGSSNGSSGGG. Residues 44-56 show a composition bias toward low complexity; the sequence is GNASSSSSNSSTP. N-linked (GlcNAc...) asparagine glycosylation is found at asparagine 45 and asparagine 52. A compositionally biased stretch (pro residues) spans 57–75; it reads SIPPPVAPTPTAPTPPIPS. An N-linked (GlcNAc...) asparagine glycan is attached at asparagine 82. The Expansin-like EG45 domain occupies 112–218; that stretch reads GGACGFKNVN…RRVPCQYPGL (107 aa). 3 cysteine pairs are disulfide-bonded: cysteine 115–cysteine 143, cysteine 146–cysteine 213, and cysteine 151–cysteine 157. The Expansin-like CBD domain maps to 231–322; that stretch reads VYMAILVEYE…DWQPNTVYSS (92 aa). An N-linked (GlcNAc...) asparagine glycan is attached at asparagine 298.

It belongs to the expansin family. Expansin B subfamily.

The protein localises to the secreted. Its subcellular location is the cell wall. It is found in the membrane. Its function is as follows. May cause loosening and extension of plant cell walls by disrupting non-covalent bonding between cellulose microfibrils and matrix glucans. No enzymatic activity has been found. May be required for rapid internodal elongation in deepwater rice during submergence. The protein is Expansin-B7 (EXPB7) of Oryza sativa subsp. japonica (Rice).